A 121-amino-acid chain; its full sequence is uncharacterized protein (121 aa).

Positions 20–98 (NEVRTSQSEV…PYYHGSKAST (79 aa)) are disordered. Positions 35–51 (KKSDNGEKDEKEEKELN) are enriched in basic and acidic residues.

This is an uncharacterized protein from Invertebrate iridescent virus 6 (IIV-6).